Reading from the N-terminus, the 185-residue chain is Ribosome-recycling factor (185 aa).

The segment at 127–158 (AVRNTRQDANNKVKKLEKDKEISEDESKKAQE) is disordered.

This sequence belongs to the RRF family.

Its subcellular location is the cytoplasm. Its function is as follows. Responsible for the release of ribosomes from messenger RNA at the termination of protein biosynthesis. May increase the efficiency of translation by recycling ribosomes from one round of translation to another. The polypeptide is Ribosome-recycling factor (Helicobacter pylori (strain G27)).